An 806-amino-acid polypeptide reads, in one-letter code: WEB family protein At3g02930, chloroplastic (806 aa).

Residues M1–R78 constitute a chloroplast transit peptide. Disordered stretches follow at residues M1–E94 and K380–K403. The span at L9–L22 shows a compositional bias: low complexity. A compositionally biased stretch (polar residues) spans P34 to P59. Coiled coils occupy residues Q88–A530, D585–N662, and E698–N757. Residues E391–K403 are compositionally biased toward basic and acidic residues. Disordered stretches follow at residues E684–T725 and K746–L777. 2 stretches are compositionally biased toward basic and acidic residues: residues N685 to T699 and K706 to T725. The span at V759–N769 shows a compositional bias: polar residues.

The protein belongs to the WEB family.

Its subcellular location is the plastid. It localises to the chloroplast. This Arabidopsis thaliana (Mouse-ear cress) protein is WEB family protein At3g02930, chloroplastic.